The primary structure comprises 1109 residues: MPRRTDLTSVLVIGSGPIVIGQAAEFDYSGTQACRVLREEGLRVILVNSNPATIMTDPEFADATYVEPITPEVVASIIAKERPDALLPTLGGQTALNTAIALHEAGVLAEYDVELIGANIEAIHLAEDRDQFKGVVERCGAESARSHIAHTIEEVLEAARDLGYPLVVRPSFTMGGLGSGIAYDEADLRRIAGAGLHYSPTTEVLLEESILGWKEYELELMRDRNDNVVVVCSIENVDPVGVHTGDSITVAPALTLTDREYQRLRDVGIAVIREVGVDTGGCNIQFAVHPDTGRVVVIEMNPRVSRSSALASKATGFPIAKIAARLAVGYTLDEIPNDITGSTPASFEPTLDYVVVKVPRFAFEKFPAADPLLTTTMKSVGEAMALGRNFTEALQKAMRSIDKAGSTFHWRGQAPDPERTAALVDAARTPTEGRLVQVQQAIRGGATLEELFEATAIDPWFLDQLFLLEEVAGRLAAVDALDAGVLALAKRHGFSDAQVAEIRDLGEATVREIRHAYGLRPVYKTVDTCAAEFEARTPYHYSSYDAETEVQPRDRPAVLILGSGPNRIGQGIEFDYSCVHAALALKGEYETVMVNCNPETVSTDYDTADRLYFEPLTFEDVLEVYHAELAVGPVAGIIVQLGGQTPLSLATRLADAGLPIWGTPPEAIDAAEDRGVFGEVLVAAGLPAPAFGTATSLAQARAVADRIGYPVLVRPSYVLGGRGMEIVYDVEQLTDYVRRATPTDGPADAPVFASPVLIDRFLDEAIEIDVDALYDGHELFLGGVMEHIEEAGIHSGDSACVLPPVTLSRREIERIRTSTEAIARGVGVRGLLNVQFALSSDVLYVLEANPRASRTVPFVAKATGVPLAKAASLLMAGATIADLRASGHLPAVDGTYAHPSSPVAVKEAVLPFKRFRTRAGTVVDTVLGPEMRSTGEVMGYDVDVPAAFAKSQAAAYGGLPTSGRVFVSVADRDKRSIVFPVARLVELGFEILATTGTADVLRRYGIDSRVVRKASDGRGPDGELTVVDLITAGEIDMVVNTPNGQGARADGYDIRTATTAADKPIVTTTQQFAAAVLGIEAIRRGPFAVASLQEHDAARAARETEGVHA.

A carboxyphosphate synthetic domain region spans residues 1-402; it reads MPRRTDLTSV…ALQKAMRSID (402 aa). ATP contacts are provided by R129, R169, G175, G176, E208, I210, E215, G241, V242, H243, Q285, and E299. Positions 133 to 328 constitute an ATP-grasp 1 domain; it reads KGVVERCGAE…IAKIAARLAV (196 aa). Mg(2+) contacts are provided by Q285, E299, and N301. Residues Q285, E299, and N301 each contribute to the Mn(2+) site. Residues 403-548 are oligomerization domain; that stretch reads KAGSTFHWRG…YHYSSYDAET (146 aa). Residues 549–956 are carbamoyl phosphate synthetic domain; the sequence is EVQPRDRPAV…AFAKSQAAAY (408 aa). In terms of domain architecture, ATP-grasp 2 spans 678-876; the sequence is GEVLVAAGLP…LAKAASLLMA (199 aa). ATP contacts are provided by R714, R760, L762, E767, G792, I793, H794, S795, Q835, and E847. Q835, E847, and N849 together coordinate Mg(2+). Mn(2+)-binding residues include Q835, E847, and N849. One can recognise an MGS-like domain in the interval 957 to 1102; it reads GGLPTSGRVF…QEHDAARAAR (146 aa). Residues 957-1109 form an allosteric domain region; it reads GGLPTSGRVF…AARETEGVHA (153 aa).

The protein belongs to the CarB family. Composed of two chains; the small (or glutamine) chain promotes the hydrolysis of glutamine to ammonia, which is used by the large (or ammonia) chain to synthesize carbamoyl phosphate. Tetramer of heterodimers (alpha,beta)4. Mg(2+) serves as cofactor. Mn(2+) is required as a cofactor.

The catalysed reaction is hydrogencarbonate + L-glutamine + 2 ATP + H2O = carbamoyl phosphate + L-glutamate + 2 ADP + phosphate + 2 H(+). It catalyses the reaction hydrogencarbonate + NH4(+) + 2 ATP = carbamoyl phosphate + 2 ADP + phosphate + 2 H(+). It participates in amino-acid biosynthesis; L-arginine biosynthesis; carbamoyl phosphate from bicarbonate: step 1/1. Its pathway is pyrimidine metabolism; UMP biosynthesis via de novo pathway; (S)-dihydroorotate from bicarbonate: step 1/3. Its function is as follows. Large subunit of the glutamine-dependent carbamoyl phosphate synthetase (CPSase). CPSase catalyzes the formation of carbamoyl phosphate from the ammonia moiety of glutamine, carbonate, and phosphate donated by ATP, constituting the first step of 2 biosynthetic pathways, one leading to arginine and/or urea and the other to pyrimidine nucleotides. The large subunit (synthetase) binds the substrates ammonia (free or transferred from glutamine from the small subunit), hydrogencarbonate and ATP and carries out an ATP-coupled ligase reaction, activating hydrogencarbonate by forming carboxy phosphate which reacts with ammonia to form carbamoyl phosphate. This chain is Carbamoyl phosphate synthase large chain, found in Beutenbergia cavernae (strain ATCC BAA-8 / DSM 12333 / CCUG 43141 / JCM 11478 / NBRC 16432 / NCIMB 13614 / HKI 0122).